The following is a 461-amino-acid chain: MSRINKNVVLALLTLTSSAFLLFQLYYYKHYLSARNGPGSSKSKGNRVGFDSTQWRAVKKFIMLTSSQNVPVFLIDPWILESINKNFEQVKNASQGPASECRFFCVPRDFTAFALQYHLWKNEDGWFRIAENMGFQCLKTESKDPRLDGIDSLSGTEIPLHYVCKLTTHAIHLVVFHERSGNYLWHGHLRLKGHMDRKFVPFRKLQFGRYPGAFDRPELQQVTVDGLDMLIPKDPGRFLEEVPHSRFIECRYKEARAFLQQYIDDNTVDAMVFRKRAKELLQLAAKTLKDLGVPFWLSSGTCLGWYRQCGIIPYSKDVDLGIFIQDYKPDIILAFQEAGLPLKHKFGKVEDSLELSFQGKNDVKLDIFFFYEEADHLWNGGTQARTGKKFKYLFPKFTLCWTEFVDIKVHVPCETVDYIEANYGKTWKIPIKTWDWKSSPPNVQPNGIWPISEWDEVIQLY.

At 1-7 (MSRINKN) the chain is on the cytoplasmic side. Positions 6-27 (KNVVLALLTLTSSAFLLFQLYY) are required and sufficient for interaction with POMGNT1. The chain crosses the membrane as a helical; Signal-anchor for type II membrane protein span at residues 8-28 (VVLALLTLTSSAFLLFQLYYY). At 29–461 (KHYLSARNGP…SEWDEVIQLY (433 aa)) the chain is on the lumenal side. The N-linked (GlcNAc...) asparagine glycan is linked to Asn92.

The protein belongs to the LicD transferase family. As to quaternary structure, forms a complex composed of FKTN/fukutin, FKRP and RXYLT1/TMEM5. Interacts (via transmembrane domain) with POMGNT1; the interaction is direct and is required for normal POMGNT1 location in Golgi membranes. In terms of tissue distribution, expressed in the retina, with highest levels found in the inner segments of photoreceptors and the outer plexiform layer (at protein level). Expressed at lower levels in the inner and outer nuclear layers, the inner plexiform layers, and the ganglion cell layers of the retina (at protein level). Expressed in the heart, brain, spleen, lung, liver, skeletal muscle, kidney and testis.

It localises to the golgi apparatus membrane. Its subcellular location is the cytoplasm. The protein resides in the nucleus. The protein localises to the endoplasmic reticulum. The enzyme catalyses 3-O-[beta-D-GalNAc-(1-&gt;3)-beta-D-GlcNAc-(1-&gt;4)-(O-6-P-alpha-D-Man)]-Thr-[protein] + CDP-L-ribitol = 3-O-[Rib-ol-P-3-beta-D-GalNAc-(1-&gt;3)-beta-D-GlcNAc-(1-&gt;4)-(O-6-P-alpha-D-Man)]-Thr-[protein] + CMP + H(+). It participates in protein modification; protein glycosylation. Its function is as follows. Catalyzes the transfer of CDP-ribitol to the distal N-acetylgalactosamine of the phosphorylated O-mannosyl trisaccharide (N-acetylgalactosamine-beta-3-N-acetylglucosamine-beta-4-(phosphate-6-)mannose), a carbohydrate structure present in alpha-dystroglycan (DAG1). This constitutes the first step in the formation of the ribitol 5-phosphate tandem repeat which links the phosphorylated O-mannosyl trisaccharide to the ligand binding moiety composed of repeats of 3-xylosyl-alpha-1,3-glucuronic acid-beta-1. Required for normal location of POMGNT1 in Golgi membranes, and for normal POMGNT1 activity. May interact with and reinforce a large complex encompassing the outside and inside of muscle membranes. Could be involved in brain development. This Mus musculus (Mouse) protein is Ribitol-5-phosphate transferase FKTN.